A 198-amino-acid polypeptide reads, in one-letter code: MKLYSLSVFYKGEPKAVLLKAAYDVSSFSFFQRSSVQEFMTFTSQLIVERSAKGSRASVKEQEYLCHVYVRSDSLAGVVIADSEYPSRVAFTLLEKVLDEFSKQVDRIDWPVGSPATIHYTALDGHLSRYQNPREADPMSKVQAELDETKIILHNTMESLLERGEKLDDLVSKSEVLGTQSKAFYKTARKQNSCCAIM.

One can recognise a Longin domain in the interval 8–131 (VFYKGEPKAV…ALDGHLSRYQ (124 aa)). Residues 138-198 (PMSKVQAELD…RKQNSCCAIM (61 aa)) enclose the v-SNARE coiled-coil homology domain. Phosphoserine is present on Ser-159. Cys-194 carries the S-palmitoyl cysteine lipid modification. Cysteine methyl ester is present on Cys-195. The S-farnesyl cysteine moiety is linked to residue Cys-195. A propeptide spans 196-198 (AIM) (removed in mature form).

The protein belongs to the synaptobrevin family. In terms of assembly, identified in 2 different SNARE complexes; the first one composed of GOSR1, GOSR2 and STX5 and the second one composed of BET1L, GOSR1 and STX5. Post-translationally, palmitoylated; catalyzes its own palmitoylation. Palmitoylation is required for Golgi targeting. In terms of processing, farnesylation is required for Golgi targeting. (Microbial infection) Targeted and hydrolyzed by C.botulinum neurotoxin type X (BoNT/X) which hydrolyzes the 173-Lys-|-Ser-174 bond and probably inhibits neurotransmitter release. It remains unknown whether BoNT/X is ever produced, or what organisms it targets. Highly expressed by neurons in brain and faintly detected in spleen, lung and kidney (at protein level). Ubiquitously expressed.

Its subcellular location is the cytoplasm. It is found in the cytosol. The protein localises to the cytoplasmic vesicle membrane. It localises to the golgi apparatus membrane. Functionally, vesicular soluble NSF attachment protein receptor (v-SNARE) mediating vesicle docking and fusion to a specific acceptor cellular compartment. Functions in endoplasmic reticulum to Golgi transport; as part of a SNARE complex composed of GOSR1, GOSR2 and STX5. Functions in early/recycling endosome to TGN transport; as part of a SNARE complex composed of BET1L, GOSR1 and STX5. Has a S-palmitoyl transferase activity. The protein is Synaptobrevin homolog YKT6 (Ykt6) of Rattus norvegicus (Rat).